The sequence spans 65 residues: Small, acid-soluble spore protein Tlp (65 aa).

The protein belongs to the Tlp family.

Its subcellular location is the spore core. The sequence is that of Small, acid-soluble spore protein Tlp from Bacillus cereus (strain B4264).